Here is a 294-residue protein sequence, read N- to C-terminus: Putative deoxyribonuclease TATDN3 (294 aa).

6 residues coordinate Zn(2+): His-9, His-11, Glu-104, His-144, His-167, and Asp-215.

This sequence belongs to the metallo-dependent hydrolases superfamily. TatD-type hydrolase family. Mn(2+) serves as cofactor. Requires Ca(2+) as cofactor. Mg(2+) is required as a cofactor. The cofactor is Zn(2+).

It localises to the nucleus. With respect to regulation, the 3'-exonuclease activity is sensitive to the metal ion present in the active site, whereas the AP endodeoxyribonuclease activity is observed in a variety of divalent metal cofactors. 3'-exoxonuclease activity is suppressed in the presence of Ca(2+), Zn(2+) and Ni(2+). Functionally, exhibits 3'-exonuclease activities and apurinic/apyrimidinic (AP) endonuclease (in vitro). Show preferential AP endonuclease activity on double-stranded DNA substrates and 3'- exonuclease activity on single-stranded DNA. This Mus musculus (Mouse) protein is Putative deoxyribonuclease TATDN3 (Tatdn3).